Reading from the N-terminus, the 445-residue chain is Tubulin beta-2 chain (445 aa).

The short motif at 1–4 (MREI) is the MREI motif element. GTP is bound by residues glutamine 11, glutamate 69, serine 138, glycine 142, threonine 143, glycine 144, asparagine 204, and asparagine 226. Mg(2+) is bound at residue glutamate 69. Residues 424 to 445 (QYQDATADEQGEFEEEGEEDEA) form a disordered region. Residues 429–445 (TADEQGEFEEEGEEDEA) are compositionally biased toward acidic residues. Residue glutamate 438 is modified to 5-glutamyl polyglutamate.

Belongs to the tubulin family. Dimer of alpha and beta chains. A typical microtubule is a hollow water-filled tube with an outer diameter of 25 nm and an inner diameter of 15 nM. Alpha-beta heterodimers associate head-to-tail to form protofilaments running lengthwise along the microtubule wall with the beta-tubulin subunit facing the microtubule plus end conferring a structural polarity. Microtubules usually have 13 protofilaments but different protofilament numbers can be found in some organisms and specialized cells. The cofactor is Mg(2+). In terms of processing, some glutamate residues at the C-terminus are polyglycylated, resulting in polyglycine chains on the gamma-carboxyl group. Glycylation is mainly limited to tubulin incorporated into axonemes (cilia and flagella) whereas glutamylation is prevalent in neuronal cells, centrioles, axonemes, and the mitotic spindle. Both modifications can coexist on the same protein on adjacent residues, and lowering polyglycylation levels increases polyglutamylation, and reciprocally. The precise function of polyglycylation is still unclear. Post-translationally, some glutamate residues at the C-terminus are polyglutamylated, resulting in polyglutamate chains on the gamma-carboxyl group. Polyglutamylation plays a key role in microtubule severing by spastin (SPAST). SPAST preferentially recognizes and acts on microtubules decorated with short polyglutamate tails: severing activity by SPAST increases as the number of glutamates per tubulin rises from one to eight, but decreases beyond this glutamylation threshold. In terms of tissue distribution, highly expressed in neuronal cells.

The protein localises to the cytoplasm. Its subcellular location is the cytoskeleton. Tubulin is the major constituent of microtubules, a cylinder consisting of laterally associated linear protofilaments composed of alpha- and beta-tubulin heterodimers. Microtubules grow by the addition of GTP-tubulin dimers to the microtubule end, where a stabilizing cap forms. Below the cap, tubulin dimers are in GDP-bound state, owing to GTPase activity of alpha-tubulin. The chain is Tubulin beta-2 chain from Gallus gallus (Chicken).